The primary structure comprises 74 residues: Kappa-scoloptoxin(03)-Ssm1a (74 aa).

The N-terminal stretch at 1-23 (MNSSIAILLVMALIMFSLDKSYS) is a signal peptide. Intrachain disulfides connect Cys-32-Cys-59, Cys-42-Cys-58, and Cys-45-Cys-68.

The protein belongs to the scoloptoxin-03 family. In terms of tissue distribution, expressed by the venom gland.

Its subcellular location is the secreted. In terms of biological role, this toxin inhibits voltage-gated potassium channel currents in DRG neurons (IC(50)=44.2 nM). In vivo, insects injected with this toxin showed signs of neurotoxicity including twitching, paralysis, and body contraction. The chain is Kappa-scoloptoxin(03)-Ssm1a from Scolopendra mutilans (Chinese red-headed centipede).